The following is a 315-amino-acid chain: Fructose-1,6-bisphosphatase class 1 (315 aa).

Mg(2+) is bound by residues Glu90, Asp111, Leu113, and Asp114. Substrate is bound by residues 114 to 117 (DGSS), Tyr222, and Lys253. Position 259 (Glu259) interacts with Mg(2+).

This sequence belongs to the FBPase class 1 family. In terms of assembly, homotetramer. Mg(2+) serves as cofactor.

The protein resides in the cytoplasm. The enzyme catalyses beta-D-fructose 1,6-bisphosphate + H2O = beta-D-fructose 6-phosphate + phosphate. The protein operates within carbohydrate biosynthesis; gluconeogenesis. In Trichlorobacter lovleyi (strain ATCC BAA-1151 / DSM 17278 / SZ) (Geobacter lovleyi), this protein is Fructose-1,6-bisphosphatase class 1.